A 99-amino-acid chain; its full sequence is Malonate decarboxylase acyl carrier protein (99 aa).

An O-(phosphoribosyl dephospho-coenzyme A)serine modification is found at S25.

This sequence belongs to the MdcC family. In terms of processing, covalently binds the prosthetic group of malonate decarboxylase.

It localises to the cytoplasm. Subunit of malonate decarboxylase, it is an acyl carrier protein to which acetyl and malonyl thioester residues are bound via a 2'-(5''-phosphoribosyl)-3'-dephospho-CoA prosthetic group and turn over during the catalytic mechanism. The chain is Malonate decarboxylase acyl carrier protein from Pseudomonas syringae pv. syringae (strain B728a).